The chain runs to 324 residues: FCS-Like Zinc finger 11 (324 aa).

The FLZ-type zinc finger occupies 266–309 (NFLGICNFCNKKLGGGDDIYMYREKSFCSEECRSEEMMIDEEDL).

It belongs to the FLZ family. As to quaternary structure, interacts with KIN10 and KIN11 via its FLZ-type zinc finger domain. Forms heterodimer with FLZ2 in vitro.

Its subcellular location is the cytoplasm. The protein resides in the nucleus. In terms of biological role, may act as an adapter to facilitate the interaction of SnRK1 complex with effector proteins, conferring tissue- and stimulus-type specific differences in the SnRK1 regulation pathway. This chain is FCS-Like Zinc finger 11, found in Arabidopsis thaliana (Mouse-ear cress).